The sequence spans 414 residues: 26S proteasome regulatory subunit 8 homolog (414 aa).

ATP is bound at residue 197 to 204 (GPPGTGKT).

It belongs to the AAA ATPase family.

The protein localises to the cytoplasm. Its subcellular location is the nucleus. Its function is as follows. The 26S proteasome is involved in the ATP-dependent degradation of ubiquitinated proteins. The regulatory (or ATPase) complex confers ATP dependency and substrate specificity to the 26S complex. The sequence is that of 26S proteasome regulatory subunit 8 homolog from Naegleria fowleri (Brain eating amoeba).